We begin with the raw amino-acid sequence, 294 residues long: Pyridoxal 5'-phosphate synthase subunit PdxS (294 aa).

A D-ribose 5-phosphate-binding site is contributed by Asp24. Lys81 functions as the Schiff-base intermediate with D-ribose 5-phosphate in the catalytic mechanism. Gly153 is a D-ribose 5-phosphate binding site. Position 165 (Arg165) interacts with D-glyceraldehyde 3-phosphate. D-ribose 5-phosphate-binding positions include Gly214 and 235-236 (GS).

It belongs to the PdxS/SNZ family. In terms of assembly, in the presence of PdxT, forms a dodecamer of heterodimers.

It carries out the reaction aldehydo-D-ribose 5-phosphate + D-glyceraldehyde 3-phosphate + L-glutamine = pyridoxal 5'-phosphate + L-glutamate + phosphate + 3 H2O + H(+). Its pathway is cofactor biosynthesis; pyridoxal 5'-phosphate biosynthesis. Its function is as follows. Catalyzes the formation of pyridoxal 5'-phosphate from ribose 5-phosphate (RBP), glyceraldehyde 3-phosphate (G3P) and ammonia. The ammonia is provided by the PdxT subunit. Can also use ribulose 5-phosphate and dihydroxyacetone phosphate as substrates, resulting from enzyme-catalyzed isomerization of RBP and G3P, respectively. The polypeptide is Pyridoxal 5'-phosphate synthase subunit PdxS (Anoxybacillus flavithermus (strain DSM 21510 / WK1)).